The sequence spans 252 residues: 3-deoxy-manno-octulosonate cytidylyltransferase (252 aa).

This sequence belongs to the KdsB family.

It localises to the cytoplasm. The enzyme catalyses 3-deoxy-alpha-D-manno-oct-2-ulosonate + CTP = CMP-3-deoxy-beta-D-manno-octulosonate + diphosphate. The protein operates within nucleotide-sugar biosynthesis; CMP-3-deoxy-D-manno-octulosonate biosynthesis; CMP-3-deoxy-D-manno-octulosonate from 3-deoxy-D-manno-octulosonate and CTP: step 1/1. Its pathway is bacterial outer membrane biogenesis; lipopolysaccharide biosynthesis. Activates KDO (a required 8-carbon sugar) for incorporation into bacterial lipopolysaccharide in Gram-negative bacteria. The chain is 3-deoxy-manno-octulosonate cytidylyltransferase from Vibrio campbellii (strain ATCC BAA-1116).